We begin with the raw amino-acid sequence, 33 residues long: Cytochrome b6-f complex subunit 8 (33 aa).

Residues I2–V22 traverse the membrane as a helical segment.

The protein belongs to the PetN family. As to quaternary structure, the 4 large subunits of the cytochrome b6-f complex are cytochrome b6, subunit IV (17 kDa polypeptide, PetD), cytochrome f and the Rieske protein, while the 4 small subunits are PetG, PetL, PetM and PetN. The complex functions as a dimer.

The protein resides in the cellular thylakoid membrane. In terms of biological role, component of the cytochrome b6-f complex, which mediates electron transfer between photosystem II (PSII) and photosystem I (PSI), cyclic electron flow around PSI, and state transitions. The chain is Cytochrome b6-f complex subunit 8 from Prochlorococcus marinus (strain NATL2A).